We begin with the raw amino-acid sequence, 309 residues long: MLHNMSNNIHNIASVLTESLSYFQKFQGKTIVIKYGGNAMVDEALKSSFARDIVLMKSVGMNPIVVHGGGPQIGKILEKIGKQSQFIDGMRVTDSETMDVVEMVLGGLVNKEIVNLIHQHGGHSIGLTGKDGSLISAKKLKSDIKPELTSEIIDLGHVGEVDKIDISVINLLLKGDFIPVIAPIGVGKDGFSYNINADLVAGSIAQALNAEKLILLTNTSGLLDANGELLTGLDVNIIDSLIENGTIYGGMLPKIDCALSSVRNGVKSTHIIDGRVAHAVLLEIFTDNGVGTLITCNESGTLITYNEQG.

Residues 69-70 (GG), arginine 91, and asparagine 194 each bind substrate.

Belongs to the acetylglutamate kinase family. ArgB subfamily.

It localises to the cytoplasm. It carries out the reaction N-acetyl-L-glutamate + ATP = N-acetyl-L-glutamyl 5-phosphate + ADP. Its pathway is amino-acid biosynthesis; L-arginine biosynthesis; N(2)-acetyl-L-ornithine from L-glutamate: step 2/4. In terms of biological role, catalyzes the ATP-dependent phosphorylation of N-acetyl-L-glutamate. The sequence is that of Acetylglutamate kinase from Vesicomyosocius okutanii subsp. Calyptogena okutanii (strain HA).